Consider the following 446-residue polypeptide: Indoleacetamide hydrolase (446 aa).

Residues Lys71 and Ser146 each act as charge relay system in the active site. Ser170 acts as the Acyl-ester intermediate in catalysis.

This sequence belongs to the amidase family.

It participates in plant hormone metabolism; auxin biosynthesis. Its function is as follows. Hydrolyzes indole-3-acetamide (IAM) into indole-3-acetic acid (IAA). This Pseudomonas syringae pv. syringae protein is Indoleacetamide hydrolase (iaaH).